We begin with the raw amino-acid sequence, 626 residues long: Elongation factor 4 (626 aa).

The region spanning 14-195 is the tr-type G domain; that stretch reads SLIRNFCIIA…RIVVDVPAPT (182 aa). GTP is bound by residues 26 to 31 and 142 to 145; these read DHGKST and NKID. The tract at residues 603 to 626 is disordered; that stretch reads LSTGEGGNDRDTKDKIRAAQKSEG. The segment covering 609–626 has biased composition (basic and acidic residues); the sequence is GNDRDTKDKIRAAQKSEG.

Belongs to the TRAFAC class translation factor GTPase superfamily. Classic translation factor GTPase family. LepA subfamily.

The protein localises to the cell membrane. It catalyses the reaction GTP + H2O = GDP + phosphate + H(+). Its function is as follows. Required for accurate and efficient protein synthesis under certain stress conditions. May act as a fidelity factor of the translation reaction, by catalyzing a one-codon backward translocation of tRNAs on improperly translocated ribosomes. Back-translocation proceeds from a post-translocation (POST) complex to a pre-translocation (PRE) complex, thus giving elongation factor G a second chance to translocate the tRNAs correctly. Binds to ribosomes in a GTP-dependent manner. This Bifidobacterium animalis subsp. lactis (strain AD011) protein is Elongation factor 4.